The following is a 142-amino-acid chain: 3-hydroxyacyl-[acyl-carrier-protein] dehydratase FabZ (142 aa).

His47 is a catalytic residue.

The protein belongs to the thioester dehydratase family. FabZ subfamily.

Its subcellular location is the cytoplasm. The catalysed reaction is a (3R)-hydroxyacyl-[ACP] = a (2E)-enoyl-[ACP] + H2O. Involved in unsaturated fatty acids biosynthesis. Catalyzes the dehydration of short chain beta-hydroxyacyl-ACPs and long chain saturated and unsaturated beta-hydroxyacyl-ACPs. This is 3-hydroxyacyl-[acyl-carrier-protein] dehydratase FabZ from Coxiella burnetii (strain RSA 331 / Henzerling II).